We begin with the raw amino-acid sequence, 103 residues long: MSLLEQVSVSKKANIYFDGKVASRSVFFADGSKQTLGVVQPGEYEFSTSQGEIMEVISGRFEVLLPETTTWQEFNEGTQFELAANVSFKIRNTAIAEYCCSYL.

It belongs to the nucleoside phosphorylase PpnP family.

It catalyses the reaction a purine D-ribonucleoside + phosphate = a purine nucleobase + alpha-D-ribose 1-phosphate. The catalysed reaction is adenosine + phosphate = alpha-D-ribose 1-phosphate + adenine. It carries out the reaction cytidine + phosphate = cytosine + alpha-D-ribose 1-phosphate. The enzyme catalyses guanosine + phosphate = alpha-D-ribose 1-phosphate + guanine. It catalyses the reaction inosine + phosphate = alpha-D-ribose 1-phosphate + hypoxanthine. The catalysed reaction is thymidine + phosphate = 2-deoxy-alpha-D-ribose 1-phosphate + thymine. It carries out the reaction uridine + phosphate = alpha-D-ribose 1-phosphate + uracil. The enzyme catalyses xanthosine + phosphate = alpha-D-ribose 1-phosphate + xanthine. Its function is as follows. Catalyzes the phosphorolysis of diverse nucleosides, yielding D-ribose 1-phosphate and the respective free bases. Can use uridine, adenosine, guanosine, cytidine, thymidine, inosine and xanthosine as substrates. Also catalyzes the reverse reactions. The polypeptide is Pyrimidine/purine nucleoside phosphorylase (Shewanella baltica (strain OS223)).